A 357-amino-acid chain; its full sequence is Alanine racemase (357 aa).

Lys-35 (proton acceptor; specific for D-alanine) is an active-site residue. Lys-35 carries the N6-(pyridoxal phosphate)lysine modification. Arg-131 is a binding site for substrate. The Proton acceptor; specific for L-alanine role is filled by Tyr-256. A substrate-binding site is contributed by Met-304.

The protein belongs to the alanine racemase family. Pyridoxal 5'-phosphate is required as a cofactor.

The enzyme catalyses L-alanine = D-alanine. It functions in the pathway amino-acid biosynthesis; D-alanine biosynthesis; D-alanine from L-alanine: step 1/1. In terms of biological role, catalyzes the interconversion of L-alanine and D-alanine. May also act on other amino acids. This is Alanine racemase (alr) from Legionella pneumophila (strain Paris).